The chain runs to 208 residues: Ribosome maturation factor RimM (208 aa).

In terms of domain architecture, PRC barrel spans 98 to 205 (ADEFYVPDLI…IIEITPPDGL (108 aa)). The segment at 154 to 174 (LPSKSKRSRDTKNQKKNQSPP) is disordered.

It belongs to the RimM family. In terms of assembly, binds ribosomal protein uS19.

Its subcellular location is the cytoplasm. An accessory protein needed during the final step in the assembly of 30S ribosomal subunit, possibly for assembly of the head region. Essential for efficient processing of 16S rRNA. May be needed both before and after RbfA during the maturation of 16S rRNA. It has affinity for free ribosomal 30S subunits but not for 70S ribosomes. The chain is Ribosome maturation factor RimM from Trichodesmium erythraeum (strain IMS101).